A 375-amino-acid polypeptide reads, in one-letter code: GDSL esterase/lipase At5g45960 (375 aa).

Residues Met-1–Ser-28 form the signal peptide. The active-site Nucleophile is Ser-54. N-linked (GlcNAc...) asparagine glycosylation is present at Asn-340. Catalysis depends on residues Asp-348 and His-351.

The protein belongs to the 'GDSL' lipolytic enzyme family.

The protein localises to the secreted. The sequence is that of GDSL esterase/lipase At5g45960 from Arabidopsis thaliana (Mouse-ear cress).